Consider the following 288-residue polypeptide: 4-diphosphocytidyl-2-C-methyl-D-erythritol kinase (288 aa).

The active site involves K8. Residue P92–T102 participates in ATP binding. Residue D134 is part of the active site.

Belongs to the GHMP kinase family. IspE subfamily.

It carries out the reaction 4-CDP-2-C-methyl-D-erythritol + ATP = 4-CDP-2-C-methyl-D-erythritol 2-phosphate + ADP + H(+). The protein operates within isoprenoid biosynthesis; isopentenyl diphosphate biosynthesis via DXP pathway; isopentenyl diphosphate from 1-deoxy-D-xylulose 5-phosphate: step 3/6. Catalyzes the phosphorylation of the position 2 hydroxy group of 4-diphosphocytidyl-2C-methyl-D-erythritol. The chain is 4-diphosphocytidyl-2-C-methyl-D-erythritol kinase from Clostridium perfringens (strain ATCC 13124 / DSM 756 / JCM 1290 / NCIMB 6125 / NCTC 8237 / Type A).